We begin with the raw amino-acid sequence, 124 residues long: Large ribosomal subunit protein bL12 (124 aa).

It belongs to the bacterial ribosomal protein bL12 family. In terms of assembly, homodimer. Part of the ribosomal stalk of the 50S ribosomal subunit. Forms a multimeric L10(L12)X complex, where L10 forms an elongated spine to which 2 to 4 L12 dimers bind in a sequential fashion. Binds GTP-bound translation factors.

In terms of biological role, forms part of the ribosomal stalk which helps the ribosome interact with GTP-bound translation factors. Is thus essential for accurate translation. The sequence is that of Large ribosomal subunit protein bL12 from Cupriavidus metallidurans (strain ATCC 43123 / DSM 2839 / NBRC 102507 / CH34) (Ralstonia metallidurans).